Consider the following 197-residue polypeptide: Probable GTP-binding protein EngB (197 aa).

In terms of domain architecture, EngB-type G spans 22–195 (QLPELALAGR…WRTILNHLKV (174 aa)). GTP is bound by residues 30–37 (GRSNVGKS), 57–61 (GKTQT), 75–78 (DVPG), 142–145 (TKAD), and 174–176 (FSS). Residues serine 37 and threonine 59 each coordinate Mg(2+).

It belongs to the TRAFAC class TrmE-Era-EngA-EngB-Septin-like GTPase superfamily. EngB GTPase family. It depends on Mg(2+) as a cofactor.

Necessary for normal cell division and for the maintenance of normal septation. This is Probable GTP-binding protein EngB from Shouchella clausii (strain KSM-K16) (Alkalihalobacillus clausii).